The primary structure comprises 259 residues: Thiazole synthase (259 aa).

Lysine 95 acts as the Schiff-base intermediate with DXP in catalysis. 1-deoxy-D-xylulose 5-phosphate contacts are provided by residues glycine 156, 183-184 (AG), and 205-206 (NS).

Belongs to the ThiG family. In terms of assembly, homotetramer. Forms heterodimers with either ThiH or ThiS.

Its subcellular location is the cytoplasm. The catalysed reaction is [ThiS sulfur-carrier protein]-C-terminal-Gly-aminoethanethioate + 2-iminoacetate + 1-deoxy-D-xylulose 5-phosphate = [ThiS sulfur-carrier protein]-C-terminal Gly-Gly + 2-[(2R,5Z)-2-carboxy-4-methylthiazol-5(2H)-ylidene]ethyl phosphate + 2 H2O + H(+). It functions in the pathway cofactor biosynthesis; thiamine diphosphate biosynthesis. Catalyzes the rearrangement of 1-deoxy-D-xylulose 5-phosphate (DXP) to produce the thiazole phosphate moiety of thiamine. Sulfur is provided by the thiocarboxylate moiety of the carrier protein ThiS. In vitro, sulfur can be provided by H(2)S. This is Thiazole synthase from Coxiella burnetii (strain CbuK_Q154) (Coxiella burnetii (strain Q154)).